Here is a 270-residue protein sequence, read N- to C-terminus: MAPWGKRLAGVRGVLLDISGVLYDSGAGGGTAIAGSVEAVARLKRSRLKVRFCTNESQKSRAELVGQLQRLGFDISEQEVTAPAPAACQILKEQGLRPYLLIHDGVRSEFDQIDTSNPNCVVIADAGESFSYQNMNNAFQVLMELEKPVLISLGKGRYYKETSGLMLDVGPYMKALEYACGIKAEVVGKPSPEFFKSALQAIGVEAHQAVMIGDDIVGDVGGAQRCGMRALQVRTGKFRPSDEHHPEVKADGYVDNLAEAVDLLLQHADK.

Positions 17 and 19 each coordinate Mg(2+). Substrate contacts are provided by residues 17 to 19 (DIS), 54 to 55 (TN), and lysine 189. Aspartate 214 is a binding site for Mg(2+).

Belongs to the HAD-like hydrolase superfamily. As to quaternary structure, homodimer. Mg(2+) serves as cofactor. In terms of tissue distribution, expressed in brain, and at lower levels in liver and kidney. Detected in thyroid (at protein level). Expressed in liver, kidney and moderately in brain.

Its subcellular location is the cytoplasm. It is found in the nucleus. It carries out the reaction diphosphate + H2O = 2 phosphate + H(+). Phosphatase that hydrolyzes imidodiphosphate, 3-phosphohistidine and 6-phospholysine. Has broad substrate specificity and can also hydrolyze inorganic diphosphate, but with lower efficiency. The sequence is that of Phospholysine phosphohistidine inorganic pyrophosphate phosphatase (LHPP) from Homo sapiens (Human).